The following is a 101-amino-acid chain: Ubiquitin-related modifier 1 homolog (101 aa).

Gly-101 is subject to 1-thioglycine. Gly-101 is covalently cross-linked (Glycyl lysine isopeptide (Gly-Lys) (interchain with K-? in acceptor proteins)).

The protein belongs to the URM1 family. Interacts with cer. C-terminal thiocarboxylation occurs in 2 steps, it is first acyl-adenylated (-COAMP) via the hesA/moeB/thiF part of the MOCS3 homolog, then thiocarboxylated (-COSH) via the rhodanese domain of the MOCS3 homolog.

It localises to the cytoplasm. It functions in the pathway tRNA modification; 5-methoxycarbonylmethyl-2-thiouridine-tRNA biosynthesis. Its function is as follows. Acts as a sulfur carrier required for 2-thiolation of mcm(5)S(2)U at tRNA wobble positions of cytosolic tRNA(Lys), tRNA(Glu) and tRNA(Gln). Serves as sulfur donor in tRNA 2-thiolation reaction by being thiocarboxylated (-COSH) at its C-terminus by MOCS3. The sulfur is then transferred to tRNA to form 2-thiolation of mcm(5)S(2)U. Also acts as a ubiquitin-like protein (UBL) that is covalently conjugated via an isopeptide bond to lysine residues of target proteins such as Prx2/Jafrac1, Ciao1, Eip71CD and GILT1. The thiocarboxylated form serves as substrate for conjugation and oxidative stress specifically induces the formation of UBL-protein conjugates. This chain is Ubiquitin-related modifier 1 homolog, found in Drosophila erecta (Fruit fly).